We begin with the raw amino-acid sequence, 373 residues long: Queuine tRNA-ribosyltransferase (373 aa).

Aspartate 93 (proton acceptor) is an active-site residue. Residues 93 to 97 (DSGGF), aspartate 147, glutamine 191, and glycine 218 contribute to the substrate site. Residues 249-255 (GVGAPRD) are RNA binding. The active-site Nucleophile is the aspartate 268. An RNA binding; important for wobble base 34 recognition region spans residues 273–277 (TRNAR). Residues cysteine 306, cysteine 308, cysteine 311, and histidine 337 each coordinate Zn(2+).

It belongs to the queuine tRNA-ribosyltransferase family. Homodimer. Within each dimer, one monomer is responsible for RNA recognition and catalysis, while the other monomer binds to the replacement base PreQ1. Zn(2+) is required as a cofactor.

It catalyses the reaction 7-aminomethyl-7-carbaguanine + guanosine(34) in tRNA = 7-aminomethyl-7-carbaguanosine(34) in tRNA + guanine. Its pathway is tRNA modification; tRNA-queuosine biosynthesis. In terms of biological role, catalyzes the base-exchange of a guanine (G) residue with the queuine precursor 7-aminomethyl-7-deazaguanine (PreQ1) at position 34 (anticodon wobble position) in tRNAs with GU(N) anticodons (tRNA-Asp, -Asn, -His and -Tyr). Catalysis occurs through a double-displacement mechanism. The nucleophile active site attacks the C1' of nucleotide 34 to detach the guanine base from the RNA, forming a covalent enzyme-RNA intermediate. The proton acceptor active site deprotonates the incoming PreQ1, allowing a nucleophilic attack on the C1' of the ribose to form the product. After dissociation, two additional enzymatic reactions on the tRNA convert PreQ1 to queuine (Q), resulting in the hypermodified nucleoside queuosine (7-(((4,5-cis-dihydroxy-2-cyclopenten-1-yl)amino)methyl)-7-deazaguanosine). The polypeptide is Queuine tRNA-ribosyltransferase (Solidesulfovibrio magneticus (strain ATCC 700980 / DSM 13731 / RS-1) (Desulfovibrio magneticus)).